The chain runs to 163 residues: Phosphopantetheine adenylyltransferase (163 aa).

Substrate is bound at residue S10. ATP contacts are provided by residues 10–11 (SF) and H18. Residues K42, L78, and K92 each coordinate substrate. ATP-binding positions include 93 to 95 (GVR), E103, and 127 to 133 (HAHVSSS).

This sequence belongs to the bacterial CoaD family. As to quaternary structure, homohexamer. Mg(2+) is required as a cofactor.

It is found in the cytoplasm. It catalyses the reaction (R)-4'-phosphopantetheine + ATP + H(+) = 3'-dephospho-CoA + diphosphate. It functions in the pathway cofactor biosynthesis; coenzyme A biosynthesis; CoA from (R)-pantothenate: step 4/5. In terms of biological role, reversibly transfers an adenylyl group from ATP to 4'-phosphopantetheine, yielding dephospho-CoA (dPCoA) and pyrophosphate. In Clavibacter michiganensis subsp. michiganensis (strain NCPPB 382), this protein is Phosphopantetheine adenylyltransferase.